A 51-amino-acid chain; its full sequence is U-Asilidin(1)-Mar1a (51 aa).

Positions 1–23 (MANYIEVFSVLAIIFATVLAALA) are cleaved as a signal peptide. Intrachain disulfides connect C26–C40, C33–C44, and C39–C49.

Belongs to the asilidin-1 family. In terms of tissue distribution, expressed by the venom gland. Is the most highly expressed peptide and is around 3000 times higher expressed in the thoracic glands compared to its body tissues.

It is found in the secreted. Its function is as follows. Induces neurotoxic effect on honeybees, including slow movements, disorientation and paralysis. Since it provokes similar symptoms than omega-atracotoxin, it is probable that it acts in the same way by inhibiting voltage-gated calcium channels. This Machimus arthriticus (Breck robberfly) protein is U-Asilidin(1)-Mar1a.